A 111-amino-acid polypeptide reads, in one-letter code: Iron-sulfur cluster insertion protein ErpA (111 aa).

Iron-sulfur cluster contacts are provided by Cys39, Cys103, and Cys105.

This sequence belongs to the HesB/IscA family. In terms of assembly, homodimer. Requires iron-sulfur cluster as cofactor.

In terms of biological role, required for insertion of 4Fe-4S clusters for at least IspG. The sequence is that of Iron-sulfur cluster insertion protein ErpA from Buchnera aphidicola subsp. Cinara cedri (strain Cc).